Here is a 68-residue protein sequence, read N- to C-terminus: Large ribosomal subunit protein uL29 (68 aa).

It belongs to the universal ribosomal protein uL29 family.

The polypeptide is Large ribosomal subunit protein uL29 (Chloroflexus aggregans (strain MD-66 / DSM 9485)).